The primary structure comprises 186 residues: uncharacterized protein (186 aa).

This is an uncharacterized protein from Acanthamoeba polyphaga (Amoeba).